The primary structure comprises 315 residues: 4-diphosphocytidyl-2-C-methyl-D-erythritol kinase (315 aa).

K10 is a catalytic residue. P107–A117 is a binding site for ATP. D148 is an active-site residue. The tract at residues H292–E315 is disordered.

This sequence belongs to the GHMP kinase family. IspE subfamily.

It carries out the reaction 4-CDP-2-C-methyl-D-erythritol + ATP = 4-CDP-2-C-methyl-D-erythritol 2-phosphate + ADP + H(+). It participates in isoprenoid biosynthesis; isopentenyl diphosphate biosynthesis via DXP pathway; isopentenyl diphosphate from 1-deoxy-D-xylulose 5-phosphate: step 3/6. Catalyzes the phosphorylation of the position 2 hydroxy group of 4-diphosphocytidyl-2C-methyl-D-erythritol. The sequence is that of 4-diphosphocytidyl-2-C-methyl-D-erythritol kinase from Corynebacterium efficiens (strain DSM 44549 / YS-314 / AJ 12310 / JCM 11189 / NBRC 100395).